A 93-amino-acid polypeptide reads, in one-letter code: Cobalt transport protein CbiN (93 aa).

2 consecutive transmembrane segments (helical) span residues 5–25 and 63–83; these read LILLAMVVALMILPFFINHGG and LLFTLQGSLGAAVIFYILGYA.

This sequence belongs to the CbiN family. As to quaternary structure, forms an energy-coupling factor (ECF) transporter complex composed of an ATP-binding protein (A component, CbiO), a transmembrane protein (T component, CbiQ) and 2 possible substrate-capture proteins (S components, CbiM and CbiN) of unknown stoichimetry.

It localises to the cell inner membrane. Its pathway is cofactor biosynthesis; adenosylcobalamin biosynthesis. Its function is as follows. Part of the energy-coupling factor (ECF) transporter complex CbiMNOQ involved in cobalt import. This chain is Cobalt transport protein CbiN, found in Klebsiella pneumoniae (strain 342).